The chain runs to 196 residues: Nucleoside triphosphate pyrophosphatase (196 aa).

Catalysis depends on Asp-73, which acts as the Proton acceptor.

This sequence belongs to the Maf family. A divalent metal cation serves as cofactor.

It is found in the cytoplasm. It catalyses the reaction a ribonucleoside 5'-triphosphate + H2O = a ribonucleoside 5'-phosphate + diphosphate + H(+). The catalysed reaction is a 2'-deoxyribonucleoside 5'-triphosphate + H2O = a 2'-deoxyribonucleoside 5'-phosphate + diphosphate + H(+). Its function is as follows. Nucleoside triphosphate pyrophosphatase. May have a dual role in cell division arrest and in preventing the incorporation of modified nucleotides into cellular nucleic acids. The chain is Nucleoside triphosphate pyrophosphatase from Anaplasma marginale (strain St. Maries).